The sequence spans 134 residues: Citrolysin protein 2 (134 aa).

The sequence is that of Citrolysin protein 2 from Citrobacter freundii.